The following is a 2172-amino-acid chain: MATDSPSLLICGSVISDPDHAYLSRIRSSIIHNPHLAELQDAVIELPELWSLLVEREKSLQRVDAARVLRNLVEWIKCGNSSLPLEGRTSRNTQLAVLTVLAHFSEYMIYLNSHDMSEEDGRGNLDAHTSVLEGVRDGGIQGLCVGLLSAIALACSPTITDVAKYGTVAVRLALCVGALVDLDETELSEPTACIFARWPQSEDDDREELLKAVLENYPSSYVGVRLDVCSVNITAPKGVAMSLMRSLEETGAVAKQINLQGRYHHPGHEAMFQKLTDLCASLQMLQFPHHSHPLVPLRWNDSGEVVTDQTPLHEVALQCILVKRADWYTTITKSVTDMAQRTVASSADSKARVLALGPVDCIPRSILFITPLQVVRPMANAAFYHGYPDDSIAIIGVSCRFPGSETLPQFWEEIRAKRVNSCLEAAGSLDCAFFRKPPREAEHMDPQHRLGLHLAYEALQSGGYFSPSSSVTDNVGCYIGMSSCDYEENVNSHPPTAYSFTGTARAFSSGRISHFFGFTGPSMVIDTACSSSGVAIHTACKAIQSGECSMALAGGINLMVPEARSHQNLAAASFLSPTGQCRPFDARADGYRRSEGGGFVLLKRLSAAVADNDCILGVLAASAVNNSKGSRSITLPSIESQSHLYRRVLQAAGLHPHQVSYVEAHGTGTQKGDPIEWQSIQNVFGGRDRSGLPPLRLGSVKGNIGHCEAASGVAALVKVILMLQNRQIPPQANFSVLNPALPSLEEANMDIPVCLEPWEAPFRAAMVNNYGASGTNAAMLVCQPPLASPERLMSTGQPHQCPILIASHSESSIRQYCRTLMSFVETQRCVLGDSLLPSIAFHLGQRQNESCRHRVAFSATSADELKVRLHSQARNNHDESKASKPQGRPKPVVLVFAGQTGRQALLSREAYLSSSLLQHHLDRCDRILQTMGLHSLFPRIFETEPVDDLVDLHCMHFSLQYSVAASWIDTGLEIKAMVGHSLGQLTALCVSGVLSLRDALKMISGRASLIQNKWGSERGCMLSVEADAPTVETIAQSMPGAGKIEIACYNAALHQVIVGTEAAIAAFEEVARSRNVSVKRLLVSRGFHSEMMDCIVPEYQQLIQQLTLHPSVIPFEPCCKLGDNWDNITPELIARQSREPVYFSDAIRRVEKRLGPCIWLEAGSGSAGVTMARRALTNPGTPSFPSHSFHSILLQGQNPIKSLADTTINLWNEGIRVQFWLYHASERRRFMPLELPPSPFEKSEHWLPVLQKHKDSELANQNQDQKQEAPELVSLAGPTDGETVEFFINQHSNDYSTFVRGRTVFGQVLAPSSVYIEAVTRAFTLLPMYLSTPSSSPPSVEVKQVRMHAPFGLDLQKRLRLTLRKETMSSWRFVVESHPIDDGDNKARKIQASGTINWQGQGCAYLEPSRPLLRRLYDRCDELRDDRSASTVQGLFVKNILARVATYDNRYLGIQSITSKGLEAVADVAMPTIMSQACAGTVLSPPIFDNFLLIAELHASSLEDLAEDVYICNGFDAVIPHAHPGDMVSKCEGPWMVLSYLNRENDKTVSCDIFVTSADRDILLLEIIGASLKRIPIRSLQKALESINGIQQIQGSTARGTASTVVIDSDSDLPDSEANSPRVGSDLHADFPDLHPTYVPRISRVTSSDYPMDSSSFSSAQPPSSASSVLSDHDQESTALLSLLSEHLNCSQGIPPDTRLGEIGLDSLVAIQLKSDVEKAFGKRLSLDTIDENLTFSDLYRMVLNHDLPNDRGSTVLSDKAPKSKSDSSLHGQSYHVTPIRETTVSFQDSTLFTTQARLEFAQIKQETSSFAQMTGFAGFYTDVHQKQTSLVLAYILEAFSTLGCDLSALQAGDPLPPLRYTSKYQKLVSRFHKILEGAGLISVCEGQSVRFRTAEPLPQFGSSADTYRELLNECPKYRPDHQLLNVTGSRLSDCLSGRADPLQLLFRDAAAVKLLEDVYVSSPMFATGNKMLGEFLHRVLSRLGSTKRLRVLEVGAGTGATTRNAMDQLLASNVDFTYTFTDVSIALVTSAKKKFGALYNSQRRQSNMEFTVLDIEKSPPANMLESYDLIISSNCIHATRNLGQACANIEKLLRRDGGMLCLLELTRPLSWLDCVFGLLDGWWRFDDDRTYALADEHKWKSTLLDAGFIHVDWTDDGYRESEQFRLITAWR.

The segment at glutamate 74–aspartate 181 is N-terminal acylcarrier protein transacylase domain (SAT). Residues aspartate 389–glutamine 783 enclose the Ketosynthase family 3 (KS3) domain. Catalysis depends on for beta-ketoacyl synthase activity residues cysteine 529, histidine 665, and histidine 706. Residues valine 895–glutamine 1197 are malonyl-CoA:ACP transacylase (MAT) domain. Serine 981 serves as the catalytic For acyl/malonyl transferase activity. An N-terminal hotdog fold region spans residues proline 1270–cysteine 1403. The PKS/mFAS DH domain maps to proline 1270–glutamine 1581. A product template (PT) domain region spans residues glycine 1277–isoleucine 1575. Residues serine 1428–glutamine 1581 form a C-terminal hotdog fold region. 2 disordered regions span residues aspartate 1608–phenylalanine 1631 and tyrosine 1650–aspartate 1672. The segment covering tyrosine 1650–serine 1668 has biased composition (low complexity). Residues serine 1671 to aspartate 1747 enclose the Carrier domain. Residue serine 1707 is modified to O-(pantetheine 4'-phosphoryl)serine. The disordered stretch occupies residues aspartate 1751–glutamine 1773. The tract at residues glutamate 1975–threonine 2155 is methyltransferase (CMeT) domain.

The protein operates within secondary metabolite biosynthesis; terpenoid biosynthesis. In terms of biological role, non-reducing polyketide synthase; part of the gene cluster that mediates the biosynthesis of diterpenoid pyrones. The first step of the pathway is the synthesis of the alpha-pyrone moiety by the polyketide synthase dpfgA via condensation of one acetyl-CoA starter unit with 3 malonyl-CoA units and 2 methylations. The alpha-pyrone is then combined with geranylgeranyl pyrophosphate (GGPP) formed by the GGPP synthase dpfgD through the action of the prenyltransferase dpfgC to yield a linear alpha-pyrone diterpenoid. Subsequent steps in the diterpenoid pyrone biosynthetic pathway involve the decalin core formation, which is initiated by the epoxidation of the C10-C11 olefin by the FAD-dependent oxidoreductase dpfgE, and is followed by a cyclization cascade catalyzed by the terpene cyclase dpfgB. The short chain dehydrogenase/reductase dpfgG then oxidizes the 8S hydroxy group to a ketone and the short chain dehydrogenase/reductase dpfgH reduces the ketone to the 8R hydroxy group to yield higginsianin B. Higginsianin B is further methylated by the methyltransferase dpfgI to produce the intermediate named FDDP B. The cytochrome P450 monooxygenase dfgpJ then catalyzes a three-step oxidation at C-27 to generate a carboxylic acid as well as C-26 hydroxylation. Finally, methyltransferase dpfgK methylates the carboxylic acid generated by dpfgJ, yielding the final diterpenoid pyrones from the pathway which were named FDDP D and FDDP E. In Gibberella zeae (strain ATCC MYA-4620 / CBS 123657 / FGSC 9075 / NRRL 31084 / PH-1) (Wheat head blight fungus), this protein is Non-reducing polyketide synthase dpfgA.